We begin with the raw amino-acid sequence, 345 residues long: Protein-glutamate methylesterase/protein-glutamine glutaminase 1 (345 aa).

A Response regulatory domain is found at 8-123 (SVLVIDDSAH…FEAMEALRVE (116 aa)). D59 is subject to 4-aspartylphosphate. In terms of domain architecture, CheB-type methylesterase spans 151 to 344 (AGEPPLVVAV…PALAALARRR (194 aa)). Catalysis depends on residues S163, H190, and D286.

The protein belongs to the CheB family. Phosphorylated by CheA. Phosphorylation of the N-terminal regulatory domain activates the methylesterase activity.

The protein resides in the cytoplasm. The catalysed reaction is [protein]-L-glutamate 5-O-methyl ester + H2O = L-glutamyl-[protein] + methanol + H(+). It catalyses the reaction L-glutaminyl-[protein] + H2O = L-glutamyl-[protein] + NH4(+). Involved in chemotaxis. Part of a chemotaxis signal transduction system that modulates chemotaxis in response to various stimuli. Catalyzes the demethylation of specific methylglutamate residues introduced into the chemoreceptors (methyl-accepting chemotaxis proteins or MCP) by CheR. Also mediates the irreversible deamidation of specific glutamine residues to glutamic acid. The polypeptide is Protein-glutamate methylesterase/protein-glutamine glutaminase 1 (Myxococcus xanthus (strain DK1622)).